A 525-amino-acid chain; its full sequence is Peptide chain release factor 3 (525 aa).

In terms of domain architecture, tr-type G spans 9 to 276; sequence AKRRTFAIIS…GFTTYAPEPQ (268 aa). GTP contacts are provided by residues 18-25, 86-90, and 140-143; these read SHPDAGKT, DTPGH, and NKFD.

The protein belongs to the TRAFAC class translation factor GTPase superfamily. Classic translation factor GTPase family. PrfC subfamily.

Its subcellular location is the cytoplasm. In terms of biological role, increases the formation of ribosomal termination complexes and stimulates activities of RF-1 and RF-2. It binds guanine nucleotides and has strong preference for UGA stop codons. It may interact directly with the ribosome. The stimulation of RF-1 and RF-2 is significantly reduced by GTP and GDP, but not by GMP. The sequence is that of Peptide chain release factor 3 from Francisella philomiragia subsp. philomiragia (strain ATCC 25017 / CCUG 19701 / FSC 153 / O#319-036).